Here is a 724-residue protein sequence, read N- to C-terminus: Eukaryotic elongation factor 2 kinase (724 aa).

Alanine 2 bears the N-acetylalanine mark. Positions 11 to 35 (EGVDGGGSSGAGRHGDSDTDSDDDE) are disordered. Residues 13-22 (VDGGGSSGAG) show a composition bias toward gly residues. A phosphoserine mark is found at serine 18, serine 27, serine 70, and serine 73. Serine 77 bears the Phosphoserine; by autocatalysis and TRPM7 mark. The segment at 80–93 (FKEAWKHAIEKAKH) is calmodulin-binding. The region spanning 115–325 (RYNAVTGEWL…ICQSMGLAPF (211 aa)) is the Alpha-type protein kinase domain. The residue at position 242 (serine 242) is a Phosphoserine. Residue 295 to 301 (GDGNLGV) participates in ATP binding. Residue threonine 347 is modified to Phosphothreonine. Residue threonine 352 is modified to Phosphothreonine; by autocatalysis. Positions 353 to 476 (EEKCGSPRIR…PESDEDSLGS (124 aa)) are disordered. Serine 358 is subject to Phosphoserine; by MAPK13 and CDK1. The segment covering 364-376 (LSGSRPPLLLRLS) has biased composition (low complexity). Phosphoserine occurs at positions 365 and 391. A compositionally biased stretch (polar residues) spans 385-403 (SDVTFDSLPSSPSSATPHS). Serine 397 carries the phosphoserine; by AMPK modification. Composition is skewed to basic and acidic residues over residues 421 to 435 (GPRD…RDSE) and 444 to 468 (SEKR…RRPE). Serine 434, serine 444, serine 469, serine 473, and serine 476 each carry phosphoserine. Serine 499 bears the Phosphoserine; by PKA mark.

It belongs to the protein kinase superfamily. Alpha-type protein kinase family. In terms of assembly, monomer or homodimer. Interacts with Calmodulin/CALM1; this interaction is strictly required for phosphorylation activity. In terms of processing, the N-terminus is blocked. Autophosphorylated at multiple residues, Thr-347 being the major site. Phosphorylated by AMP-activated protein kinase AMPK at Ser-397 leading to EEF2K activation and protein synthesis inhibition. Phosphorylated by TRPM7 at Ser-77 resulting in improved protein stability, higher EE2F phosphorylated and subsequently reduced rate of protein synthesis. Phosphorylation by other kinases such as CDK1 and MAPK13 at Ser-358 or RPS6KA1 and RPS6KB1 at Ser-365 instead decrease EEF2K activity and promote protein synthesis. In terms of tissue distribution, widely expressed, with high levels in reticulocytes and skeletal muscle.

The catalysed reaction is [translation elongation factor 2] + ATP = [translation elongation factor 2]-phosphate + ADP + H(+). Undergoes calcium/calmodulin-dependent intramolecular autophosphorylation, and this results in it becoming partially calcium/calmodulin-independent. In terms of biological role, threonine kinase that regulates protein synthesis by controlling the rate of peptide chain elongation. Upon activation by a variety of upstream kinases including AMPK or TRPM7, phosphorylates the elongation factor EEF2 at a single site, renders it unable to bind ribosomes and thus inactive. In turn, the rate of protein synthesis is reduced. The polypeptide is Eukaryotic elongation factor 2 kinase (Rattus norvegicus (Rat)).